An 882-amino-acid chain; its full sequence is Valine--tRNA ligase (882 aa).

The 'HIGH' region signature appears at 42-52; it reads PNVTGKLHLGH. The 'KMSKS' region signature appears at 522 to 526; sequence KMSKS. Lys-525 provides a ligand contact to ATP. Positions 849–873 form a coiled coil; that stretch reads KIEIEKKKYESYCKQYKKLLESKNN.

It belongs to the class-I aminoacyl-tRNA synthetase family. ValS type 1 subfamily. Monomer.

The protein resides in the cytoplasm. It catalyses the reaction tRNA(Val) + L-valine + ATP = L-valyl-tRNA(Val) + AMP + diphosphate. Functionally, catalyzes the attachment of valine to tRNA(Val). As ValRS can inadvertently accommodate and process structurally similar amino acids such as threonine, to avoid such errors, it has a 'posttransfer' editing activity that hydrolyzes mischarged Thr-tRNA(Val) in a tRNA-dependent manner. The chain is Valine--tRNA ligase from Onion yellows phytoplasma (strain OY-M).